A 684-amino-acid chain; its full sequence is Threonine--tRNA ligase (684 aa).

The region spanning 1–66 is the TGS domain; sequence MTVPATDSWP…DTDAEVVPVA (66 aa). A catalytic region spans residues 261-567; the sequence is DHRKLGSELD…LTEHYAGAFP (307 aa). Zn(2+) contacts are provided by Cys-366, His-417, and His-544.

Belongs to the class-II aminoacyl-tRNA synthetase family. In terms of assembly, homodimer. Zn(2+) serves as cofactor.

It localises to the cytoplasm. It catalyses the reaction tRNA(Thr) + L-threonine + ATP = L-threonyl-tRNA(Thr) + AMP + diphosphate + H(+). In terms of biological role, catalyzes the attachment of threonine to tRNA(Thr) in a two-step reaction: L-threonine is first activated by ATP to form Thr-AMP and then transferred to the acceptor end of tRNA(Thr). Also edits incorrectly charged L-seryl-tRNA(Thr). The sequence is that of Threonine--tRNA ligase from Mycobacterium avium (strain 104).